We begin with the raw amino-acid sequence, 428 residues long: Enolase 1 (428 aa).

(2R)-2-phosphoglycerate is bound at residue Gln167. Glu209 functions as the Proton donor in the catalytic mechanism. Mg(2+) contacts are provided by Asp246, Glu288, and Asp315. The (2R)-2-phosphoglycerate site is built by Lys340, Arg369, Ser370, and Lys391. The active-site Proton acceptor is Lys340.

The protein belongs to the enolase family. Component of the RNA degradosome, a multiprotein complex involved in RNA processing and mRNA degradation. Mg(2+) serves as cofactor.

Its subcellular location is the cytoplasm. It is found in the secreted. It localises to the cell surface. It carries out the reaction (2R)-2-phosphoglycerate = phosphoenolpyruvate + H2O. The protein operates within carbohydrate degradation; glycolysis; pyruvate from D-glyceraldehyde 3-phosphate: step 4/5. Functionally, catalyzes the reversible conversion of 2-phosphoglycerate (2-PG) into phosphoenolpyruvate (PEP). It is essential for the degradation of carbohydrates via glycolysis. The polypeptide is Enolase 1 (Pseudomonas syringae pv. syringae (strain B728a)).